The primary structure comprises 1108 residues: cGMP-inhibited 3',5'-cyclic phosphodiesterase 3B (1108 aa).

Residues 1-11 (MRKDERERDTP) show a composition bias toward basic and acidic residues. Positions 1–32 (MRKDERERDTPAMRSPPPPPPPATATAASPPE) are disordered. Positions 1–32 (MRKDERERDTPAMRSPPPPPPPATATAASPPE) are interaction with RAPGEF3. The span at 14–23 (RSPPPPPPPA) shows a compositional bias: pro residues. Ser-15 carries the phosphoserine modification. 6 helical membrane passes run 73-93 (AGAR…LLGA), 114-134 (LSLS…CFLT), 144-164 (AGSW…FAAW), 175-195 (AAAA…LTLA), 204-224 (VLVL…LGAL), and 231-251 (LLSC…DHFF). Ser-279 carries the post-translational modification Phosphoserine; by PKB/AKT1 or PKB/AKT2. Phosphoserine is present on residues Ser-280 and Ser-427. The interval 405-448 (DRKLHKGLSSKPSFPTAQLRRSSGASGLLTSEHHSRWDRSGGKR) is disordered. Positions 414-433 (SKPSFPTAQLRRSSGASGLL) are enriched in polar residues. Positions 421–445 (AQLRRSSGASGLLTSEHHSRWDRSG) are interaction with PIK3R6. Positions 435 to 445 (SEHHSRWDRSG) are enriched in basic and acidic residues. Positions 633–1070 (PNIDQEVLLD…KIWKEIIEEE (438 aa)) constitute a PDEase domain. The active-site Proton donor is the His-719. His-719 contributes to the AMP binding site. Positions 723, 803, 804, and 919 each coordinate Mg(2+). Positions 804, 919, and 970 each coordinate AMP. Acidic residues predominate over residues 999–1033 (EEGDDTESDDDDDDDDDDDDDDDEELDSDDEETED). Residues 999–1042 (EEGDDTESDDDDDDDDDDDDDDDEELDSDDEETEDNLNPKPQRR) form a disordered region.

This sequence belongs to the cyclic nucleotide phosphodiesterase family. PDE3 subfamily. Homodimer. Interacts with PIK3CG; regulates PDE3B activity and thereby cAMP levels in cells. Interacts with RAPGEF3 and PIK3R6; form a signaling complex that regulates phosphatidylinositol 3-kinase gamma in angiogenesis. Interacts with ABHD15; this interaction regulates PDE3B's stability and expression and, thereby, impacts the antilipolytic action of insulin. Mg(2+) serves as cofactor. Mn(2+) is required as a cofactor. In terms of processing, phosphorylation at Ser-279 mediates insulin-induced activation of PDE3B. Abundant in adipose tissues.

Its subcellular location is the membrane. The enzyme catalyses a nucleoside 3',5'-cyclic phosphate + H2O = a nucleoside 5'-phosphate + H(+). It catalyses the reaction 3',5'-cyclic AMP + H2O = AMP + H(+). It carries out the reaction 3',5'-cyclic GMP + H2O = GMP + H(+). With respect to regulation, inhibited by cGMP. In terms of biological role, cyclic nucleotide phosphodiesterase with a dual-specificity for the second messengers cAMP and cGMP, which are key regulators of many important physiological processes. Regulates angiogenesis by inhibiting the cAMP-dependent guanine nucleotide exchange factor RAPGEF3 and downstream phosphatidylinositol 3-kinase gamma-mediated signaling. Controls cardiac contractility by reducing cAMP concentration in cardiocytes. This Rattus norvegicus (Rat) protein is cGMP-inhibited 3',5'-cyclic phosphodiesterase 3B.